A 380-amino-acid polypeptide reads, in one-letter code: tRNA (guanine(26)-N(2))-dimethyltransferase (380 aa).

A Trm1 methyltransferase domain is found at 2–374 (ITVNEGSVTI…AGIGEIEEVL (373 aa)). Residues Arg-35, Arg-65, Asp-83, Asp-109, and Ala-110 each contribute to the S-adenosyl-L-methionine site. 4 residues coordinate Zn(2+): Cys-242, Cys-245, Cys-261, and Cys-264.

This sequence belongs to the class I-like SAM-binding methyltransferase superfamily. Trm1 family.

It carries out the reaction guanosine(26) in tRNA + 2 S-adenosyl-L-methionine = N(2)-dimethylguanosine(26) in tRNA + 2 S-adenosyl-L-homocysteine + 2 H(+). Dimethylates a single guanine residue at position 26 of a number of tRNAs using S-adenosyl-L-methionine as donor of the methyl groups. The chain is tRNA (guanine(26)-N(2))-dimethyltransferase from Methanothermobacter thermautotrophicus (strain ATCC 29096 / DSM 1053 / JCM 10044 / NBRC 100330 / Delta H) (Methanobacterium thermoautotrophicum).